Here is a 31-residue protein sequence, read N- to C-terminus: Mycofactocin precursor peptide (31 aa).

This sequence belongs to the mycofactocin precursor peptide family. In terms of processing, the post-translational modifications that lead to mycofactocin involve oxidative decarboxylation of the C-terminal tyrosine residue catalyzed by MftC, introduction of a tyramine-valine cross-link, removal of the modified C-terminal dipeptide by MftE. The released dipeptide then undergoes oxidative deamination by MftD, glycosylation by MftF and methylation by an unknown enzyme.

Functionally, precursor peptide that leads to mycofactocin (MFT) after extensive post-translational modifications by enzymes encoded by adjacent genes. Mycofactocin acts as a redox cofactor of nicotinamide-dependent oxidoreductases encoded in the same locus. Is required for the in vivo ethanol assimilation in M.smegmatis. This Mycolicibacterium smegmatis (strain ATCC 700084 / mc(2)155) (Mycobacterium smegmatis) protein is Mycofactocin precursor peptide.